A 98-amino-acid polypeptide reads, in one-letter code: Phosphoribosyl-ATP pyrophosphatase (98 aa).

Belongs to the PRA-PH family.

It is found in the cytoplasm. It catalyses the reaction 1-(5-phospho-beta-D-ribosyl)-ATP + H2O = 1-(5-phospho-beta-D-ribosyl)-5'-AMP + diphosphate + H(+). The protein operates within amino-acid biosynthesis; L-histidine biosynthesis; L-histidine from 5-phospho-alpha-D-ribose 1-diphosphate: step 2/9. This is Phosphoribosyl-ATP pyrophosphatase from Pelotomaculum thermopropionicum (strain DSM 13744 / JCM 10971 / SI).